The primary structure comprises 362 residues: Probable cinnamyl alcohol dehydrogenase 9 (362 aa).

Residue C45 coordinates Zn(2+). S47 is an NADP(+) binding site. Zn(2+) contacts are provided by H67, E68, C98, C101, C104, C112, and C167. Residues T171, 192-197 (GLGGLG), 215-220 (STSPWK), T255, G279, and 302-304 (SMI) contribute to the NADP(+) site.

The protein belongs to the zinc-containing alcohol dehydrogenase family. In terms of assembly, homodimer. Zn(2+) serves as cofactor.

The catalysed reaction is (E)-cinnamyl alcohol + NADP(+) = (E)-cinnamaldehyde + NADPH + H(+). The enzyme catalyses (E)-coniferol + NADP(+) = (E)-coniferaldehyde + NADPH + H(+). It carries out the reaction (E)-sinapyl alcohol + NADP(+) = (E)-sinapaldehyde + NADPH + H(+). It catalyses the reaction (E)-4-coumaroyl alcohol + NADP(+) = (E)-4-coumaraldehyde + NADPH + H(+). The catalysed reaction is (E)-caffeyl alcohol + NADP(+) = (E)-caffeyl aldehyde + NADPH + H(+). The protein operates within aromatic compound metabolism; phenylpropanoid biosynthesis. In terms of biological role, involved in lignin biosynthesis. Catalyzes the final step specific for the production of lignin monomers. Catalyzes the NADPH-dependent reduction of coniferaldehyde, 5-hydroxyconiferaldehyde, sinapaldehyde, 4-coumaraldehyde and caffeyl aldehyde to their respective alcohols. This is Probable cinnamyl alcohol dehydrogenase 9 from Oryza sativa subsp. japonica (Rice).